Reading from the N-terminus, the 387-residue chain is Protein adenylyltransferase VopS (387 aa).

ATP-binding positions include 76–77 (IT), 122–124 (LDS), 353–355 (GNG), and Arg-359. The 110-residue stretch at 278-387 (LNMDNLKELH…NAENSLHGIK (110 aa)) folds into the Fido domain.

It is found in the secreted. The enzyme catalyses L-tyrosyl-[protein] + ATP = O-(5'-adenylyl)-L-tyrosyl-[protein] + diphosphate. The catalysed reaction is L-threonyl-[protein] + ATP = 3-O-(5'-adenylyl)-L-threonyl-[protein] + diphosphate. Functionally, adenylyltransferase involved in virulence by mediating the addition of adenosine 5'-monophosphate (AMP) to specific threonine residue of host Rho GTPases RhoA, Rac and Cdc42. The resulting AMPylation prevents the interaction of Rho GTPases with downstream effectors, thereby inhibiting actin assembly in infected cells. The protein is Protein adenylyltransferase VopS (vopS) of Vibrio parahaemolyticus serotype O3:K6 (strain RIMD 2210633).